The following is a 138-amino-acid chain: Phosphoribosyl-AMP cyclohydrolase (138 aa).

D86 is a Mg(2+) binding site. C87 lines the Zn(2+) pocket. The Mg(2+) site is built by D88 and D90. C104 and C111 together coordinate Zn(2+).

This sequence belongs to the PRA-CH family. In terms of assembly, homodimer. Mg(2+) is required as a cofactor. It depends on Zn(2+) as a cofactor.

The protein localises to the cytoplasm. The catalysed reaction is 1-(5-phospho-beta-D-ribosyl)-5'-AMP + H2O = 1-(5-phospho-beta-D-ribosyl)-5-[(5-phospho-beta-D-ribosylamino)methylideneamino]imidazole-4-carboxamide. The protein operates within amino-acid biosynthesis; L-histidine biosynthesis; L-histidine from 5-phospho-alpha-D-ribose 1-diphosphate: step 3/9. In terms of biological role, catalyzes the hydrolysis of the adenine ring of phosphoribosyl-AMP. This chain is Phosphoribosyl-AMP cyclohydrolase, found in Marinobacter nauticus (strain ATCC 700491 / DSM 11845 / VT8) (Marinobacter aquaeolei).